The sequence spans 416 residues: S-adenosylmethionine synthase (416 aa).

Residue His14 participates in ATP binding. Asp16 is a binding site for Mg(2+). Glu42 serves as a coordination point for K(+). The L-methionine site is built by Glu55 and Gln98. The flexible loop stretch occupies residues 98 to 108 (QSADINQGVDR). ATP-binding positions include 164 to 166 (DAK), 240 to 241 (KF), Asp249, 255 to 256 (RK), Ala272, and Lys276. L-methionine is bound at residue Asp249. L-methionine is bound at residue Lys280.

The protein belongs to the AdoMet synthase family. Homotetramer; dimer of dimers. It depends on Mg(2+) as a cofactor. Requires K(+) as cofactor.

Its subcellular location is the cytoplasm. It catalyses the reaction L-methionine + ATP + H2O = S-adenosyl-L-methionine + phosphate + diphosphate. It participates in amino-acid biosynthesis; S-adenosyl-L-methionine biosynthesis; S-adenosyl-L-methionine from L-methionine: step 1/1. In terms of biological role, catalyzes the formation of S-adenosylmethionine (AdoMet) from methionine and ATP. The overall synthetic reaction is composed of two sequential steps, AdoMet formation and the subsequent tripolyphosphate hydrolysis which occurs prior to release of AdoMet from the enzyme. The polypeptide is S-adenosylmethionine synthase (Flavobacterium johnsoniae (strain ATCC 17061 / DSM 2064 / JCM 8514 / BCRC 14874 / CCUG 350202 / NBRC 14942 / NCIMB 11054 / UW101) (Cytophaga johnsonae)).